The chain runs to 79 residues: Cytochrome c-551 (79 aa).

The span at 1–14 (DGQSIYESGTSPTC) shows a compositional bias: polar residues. Residues 1 to 35 (DGQSIYESGTSPTCASCHDRGTAGAPKINEPGDWD) are disordered. Heme c is bound by residues C14, C17, H18, and M55.

Post-translationally, binds 1 heme c group covalently per subunit.

This Halorhodospira halochloris (Ectothiorhodospira halochloris) protein is Cytochrome c-551.